A 406-amino-acid chain; its full sequence is Argininosuccinate synthase (406 aa).

ATP-binding positions include 12 to 20 (AYSGGLDTS) and A39. L-citrulline is bound by residues Y90 and S95. G120 provides a ligand contact to ATP. Positions 122, 126, and 127 each coordinate L-aspartate. Position 126 (N126) interacts with L-citrulline. The L-citrulline site is built by R130, S179, S188, E264, and Y276.

This sequence belongs to the argininosuccinate synthase family. Type 1 subfamily. Homotetramer.

It is found in the cytoplasm. It catalyses the reaction L-citrulline + L-aspartate + ATP = 2-(N(omega)-L-arginino)succinate + AMP + diphosphate + H(+). It participates in amino-acid biosynthesis; L-arginine biosynthesis; L-arginine from L-ornithine and carbamoyl phosphate: step 2/3. The polypeptide is Argininosuccinate synthase (Geobacter sp. (strain M21)).